The primary structure comprises 105 residues: UPF0235 protein A1C_06510 (105 aa).

It belongs to the UPF0235 family.

The protein is UPF0235 protein A1C_06510 of Rickettsia akari (strain Hartford).